The primary structure comprises 770 residues: Cullin-1 (770 aa).

Residues 700 to 761 enclose the Cullin neddylation domain; sequence DRKLQIQAAI…EKEYLMRVEG (62 aa). K714 is covalently cross-linked (Glycyl lysine isopeptide (Lys-Gly) (interchain with G-Cter in NEDD8)).

This sequence belongs to the cullin family. As to quaternary structure, part of a complex that includes culA, fbxA and regA. Formation of this complex is dependent on the MAP kinase erkB. Post-translationally, neddylated; which enhances the ubiquitination activity of SCF.

It participates in protein modification; protein ubiquitination. In terms of biological role, probable core component of cullin-based SCF-like E3 ubiquitin-protein ligase complexes which mediate the ubiquitination and subsequent proteasomal degradation of target proteins. The E3 ubiquitin-protein ligase activity of the complex is dependent on the neddylation of the cullin subunit. Required at several stages during development. CulA and fbxA regulate multicellular development by targeting regA for degradation via a pathway that requires erkB function, leading to an increase in cAMP and PKA activity. The sequence is that of Cullin-1 (culA) from Dictyostelium discoideum (Social amoeba).